We begin with the raw amino-acid sequence, 84 residues long: Mu-Sparatoxin-Hp1 (84 aa).

An N-terminal signal peptide occupies residues 1 to 20; it reads MKIAIVMTLLLVAFSTASFA. Positions 21 to 35 are excised as a propeptide; the sequence is IEPIERAALDLVMAR. 3 disulfide bridges follow: Cys-54–Cys-68, Cys-61–Cys-73, and Cys-67–Cys-78. Leu-82 is modified (leucine amide).

Expressed by the venom gland.

The protein resides in the secreted. Functionally, weakly nhibits voltage-gated sodium channels Nav1.7/SCN9A. High concentration of the toxin (3 uM) inhibits Nav1.7/SCN9A currents by 79%. In Heteropoda pingtungensis (Pingtung huntsman spider), this protein is Mu-Sparatoxin-Hp1.